We begin with the raw amino-acid sequence, 62 residues long: MDEKLSRVDPKLLDLLVCPLSKGRLSYDREHNELVSEKARLAYPIRDGIPIMLVSEARRLDE.

The protein belongs to the UPF0434 family.

The sequence is that of UPF0434 protein Rleg2_3773 from Rhizobium leguminosarum bv. trifolii (strain WSM2304).